Here is a 57-residue protein sequence, read N- to C-terminus: Large ribosomal subunit protein bL32 (57 aa).

Belongs to the bacterial ribosomal protein bL32 family.

The chain is Large ribosomal subunit protein bL32 from Bacillus anthracis (strain A0248).